Consider the following 306-residue polypeptide: uncharacterized protein (306 aa).

This sequence to L.delbrueckii similar ORF in glnA 5'region.

This is an uncharacterized protein from Lactobacillus delbrueckii subsp. bulgaricus.